The following is a 360-amino-acid chain: DNA replication and repair protein RecF (360 aa).

ATP is bound at residue G30 to T37.

It belongs to the RecF family.

The protein localises to the cytoplasm. Its function is as follows. The RecF protein is involved in DNA metabolism; it is required for DNA replication and normal SOS inducibility. RecF binds preferentially to single-stranded, linear DNA. It also seems to bind ATP. The protein is DNA replication and repair protein RecF of Thioalkalivibrio sulfidiphilus (strain HL-EbGR7).